Consider the following 43-residue polypeptide: Protein PsbN (43 aa).

The helical transmembrane segment at 5–27 (NLVTISISCLLVSLTGYAIYTSF) threads the bilayer.

This sequence belongs to the PsbN family.

It is found in the plastid. Its subcellular location is the chloroplast thylakoid membrane. May play a role in photosystem I and II biogenesis. The protein is Protein PsbN of Gnetum gnemon (Spanish joint-fir).